A 227-amino-acid polypeptide reads, in one-letter code: Phosphoribosylformylglycinamidine synthase subunit PurQ (227 aa).

The Glutamine amidotransferase type-1 domain maps to 3–225 (FAVIVFPGSN…LKQWRETYVV (223 aa)). Cys-86 acts as the Nucleophile in catalysis. Residues His-194 and Glu-196 contribute to the active site.

As to quaternary structure, part of the FGAM synthase complex composed of 1 PurL, 1 PurQ and 2 PurS subunits.

The protein resides in the cytoplasm. The enzyme catalyses N(2)-formyl-N(1)-(5-phospho-beta-D-ribosyl)glycinamide + L-glutamine + ATP + H2O = 2-formamido-N(1)-(5-O-phospho-beta-D-ribosyl)acetamidine + L-glutamate + ADP + phosphate + H(+). It carries out the reaction L-glutamine + H2O = L-glutamate + NH4(+). It functions in the pathway purine metabolism; IMP biosynthesis via de novo pathway; 5-amino-1-(5-phospho-D-ribosyl)imidazole from N(2)-formyl-N(1)-(5-phospho-D-ribosyl)glycinamide: step 1/2. Part of the phosphoribosylformylglycinamidine synthase complex involved in the purines biosynthetic pathway. Catalyzes the ATP-dependent conversion of formylglycinamide ribonucleotide (FGAR) and glutamine to yield formylglycinamidine ribonucleotide (FGAM) and glutamate. The FGAM synthase complex is composed of three subunits. PurQ produces an ammonia molecule by converting glutamine to glutamate. PurL transfers the ammonia molecule to FGAR to form FGAM in an ATP-dependent manner. PurS interacts with PurQ and PurL and is thought to assist in the transfer of the ammonia molecule from PurQ to PurL. This is Phosphoribosylformylglycinamidine synthase subunit PurQ from Bacillus cereus (strain Q1).